Reading from the N-terminus, the 518-residue chain is Glutamate--cysteine ligase (518 aa).

It belongs to the glutamate--cysteine ligase type 1 family. Type 1 subfamily.

The catalysed reaction is L-cysteine + L-glutamate + ATP = gamma-L-glutamyl-L-cysteine + ADP + phosphate + H(+). It functions in the pathway sulfur metabolism; glutathione biosynthesis; glutathione from L-cysteine and L-glutamate: step 1/2. The protein is Glutamate--cysteine ligase of Escherichia coli O157:H7.